Reading from the N-terminus, the 370-residue chain is Probable pectin lyase E (370 aa).

The cysteines at positions 75 and 96 are disulfide-linked. Arg245 is a catalytic residue. N-linked (GlcNAc...) asparagine glycosylation occurs at Asn307. A disulfide bridge links Cys311 with Cys319.

This sequence belongs to the polysaccharide lyase 1 family.

It is found in the secreted. It carries out the reaction Eliminative cleavage of (1-&gt;4)-alpha-D-galacturonan methyl ester to give oligosaccharides with 4-deoxy-6-O-methyl-alpha-D-galact-4-enuronosyl groups at their non-reducing ends.. Its function is as follows. Pectinolytic enzymes consist of four classes of enzymes: pectin lyase, polygalacturonase, pectin methylesterase and rhamnogalacturonase. Among pectinolytic enzymes, pectin lyase is the most important in depolymerization of pectin, since it cleaves internal glycosidic bonds of highly methylated pectins. This chain is Probable pectin lyase E (pelE), found in Aspergillus niger.